Reading from the N-terminus, the 200-residue chain is Small ribosomal subunit protein uS4 (200 aa).

Positions 22 to 42 (TGKELEKRPYAPGPHGPGQRK) are disordered. One can recognise an S4 RNA-binding domain in the interval 92-152 (SRLDNIVYRL…EKSQNLSVVK (61 aa)).

Belongs to the universal ribosomal protein uS4 family. In terms of assembly, part of the 30S ribosomal subunit. Contacts protein S5. The interaction surface between S4 and S5 is involved in control of translational fidelity.

Functionally, one of the primary rRNA binding proteins, it binds directly to 16S rRNA where it nucleates assembly of the body of the 30S subunit. With S5 and S12 plays an important role in translational accuracy. The protein is Small ribosomal subunit protein uS4 of Bacillus licheniformis (strain ATCC 14580 / DSM 13 / JCM 2505 / CCUG 7422 / NBRC 12200 / NCIMB 9375 / NCTC 10341 / NRRL NRS-1264 / Gibson 46).